The sequence spans 351 residues: UDP-3-O-acylglucosamine N-acyltransferase (351 aa).

His240 serves as the catalytic Proton acceptor.

The protein belongs to the transferase hexapeptide repeat family. LpxD subfamily. As to quaternary structure, homotrimer.

It catalyses the reaction a UDP-3-O-[(3R)-3-hydroxyacyl]-alpha-D-glucosamine + a (3R)-hydroxyacyl-[ACP] = a UDP-2-N,3-O-bis[(3R)-3-hydroxyacyl]-alpha-D-glucosamine + holo-[ACP] + H(+). It functions in the pathway bacterial outer membrane biogenesis; LPS lipid A biosynthesis. Its function is as follows. Catalyzes the N-acylation of UDP-3-O-acylglucosamine using 3-hydroxyacyl-ACP as the acyl donor. Is involved in the biosynthesis of lipid A, a phosphorylated glycolipid that anchors the lipopolysaccharide to the outer membrane of the cell. The protein is UDP-3-O-acylglucosamine N-acyltransferase of Pseudomonas syringae pv. tomato (strain ATCC BAA-871 / DC3000).